Here is a 442-residue protein sequence, read N- to C-terminus: MEASRCRLSPSGDSVFHEEMMKMRQAKLDYQRLLLEKRQRKKRLEPFMVQPNPEARLRRAKPRASDEQTPLVNCHTPHSNVILHGIDGPAAVLKPDEVHAPSVSSSVVEEDAENTVDTASKPGLQERLQKHDISESVNFDEETDGISQSACLERPNSASSQNSTDTGTSGSATAAQPADNLLGDIDDLEDFVYSPAPQGVTVRCRIIRDKRGMDRGLFPTYYMYLEKEENQKIFLLAARKRKKSKTANYLISIDPVDLSREGESYVGKLRSNLMGTKFTVYDRGICPMKGRGLVGAAHTRQELAAISYETNVLGFKGPRKMSVIIPGMTLNHKQIPYQPQNNHDSLLSRWQNRTMENLVELHNKAPVWNSDTQSYVLNFRGRVTQASVKNFQIVHKNDPDYIVMQFGRVADDVFTLDYNYPLCAVQAFGIGLSSFDSKLACE.

Positions 23-68 are required for association with the IFT complex A (IFT-A); the sequence is MRQAKLDYQRLLLEKRQRKKRLEPFMVQPNPEARLRRAKPRASDEQ. A disordered region spans residues 101 to 177; it reads PSVSSSVVEE…TSGSATAAQP (77 aa). Over residues 145–162 the composition is skewed to polar residues; it reads GISQSACLERPNSASSQN. Over residues 163-175 the composition is skewed to low complexity; the sequence is STDTGTSGSATAA.

It belongs to the TUB family. As to quaternary structure, associates with the IFT complex A (IFT-A). Interacts with SIRT1. As to expression, expressed at high levels in testis, ovaries, thyroid, and spinal cord.

The protein localises to the nucleus. Its subcellular location is the cell membrane. It localises to the cell projection. It is found in the cilium. The protein resides in the cytoplasm. The protein localises to the secreted. Its function is as follows. Negative regulator of the Shh signaling transduction pathway: recruited to primary cilia via association with the IFT complex A (IFT-A) and is required for recruitment of G protein-coupled receptor GPR161 to cilia, a promoter of PKA-dependent basal repression machinery in Shh signaling. Binds to phosphorylated inositide (phosphoinositide) lipids. Both IFT-A- and phosphoinositide-binding properties are required to regulate ciliary G protein-coupled receptor trafficking. During adipogenesis, regulates ciliary trafficking of FFAR4 in preadipocytes. In Homo sapiens (Human), this protein is Tubby-related protein 3.